The chain runs to 401 residues: LysM domain-containing GPI-anchored protein LYP4 (401 aa).

Residues 1 to 23 (MPPPLLLLLLLAAAAAAVAPARS) form the signal peptide. 4 cysteine pairs are disulfide-bonded: C30–C96, C36–C162, C94–C160, and C96–C162. LysM domains lie at 106–156 (VRYV…TLFV) and 175–218 (LTYV…IIVV). Disulfide bonds link C223-C255 and C250-C279. N-linked (GlcNAc...) asparagine glycosylation occurs at N240. N-linked (GlcNAc...) asparagine glycans are attached at residues N281, N288, and N310. S373 carries the GPI-anchor amidated serine lipid modification. Positions 374–401 (SGPPPAGRHVVGDVLGAFALCLVGNLLW) are cleaved as a propeptide — removed in mature form.

Interacts with LYP6. Interacts with CEBIP. Interacts with CERK1. As to expression, expressed in roots and leaves.

The protein resides in the cell membrane. Functionally, functions in innate immunity. Functions as a pattern recognition receptor (PRR), sensing bacterial peptidoglycan (PGN) and fungal chitin at the cell surface. Involved in resistance against the bacterial pathogen Xanthomonas oryzae pv. oryzae (Xoo) and the fungal pathogen Magnaporthe oryzae. Binds PGN and fungal chitin in vitro. Involved in microbe-associated molecular patterns (MAMPs) perception and participates in the activation of defense genes against the bacterial pathogen Xanthomonas oryzae pv. oryzicola (Xoc) or the fungal pathogen Magnaporthe oryzae. The sequence is that of LysM domain-containing GPI-anchored protein LYP4 from Oryza sativa subsp. japonica (Rice).